A 195-amino-acid chain; its full sequence is Imidazoleglycerol-phosphate dehydratase (195 aa).

This sequence belongs to the imidazoleglycerol-phosphate dehydratase family.

It localises to the cytoplasm. The enzyme catalyses D-erythro-1-(imidazol-4-yl)glycerol 3-phosphate = 3-(imidazol-4-yl)-2-oxopropyl phosphate + H2O. The protein operates within amino-acid biosynthesis; L-histidine biosynthesis; L-histidine from 5-phospho-alpha-D-ribose 1-diphosphate: step 6/9. This Polynucleobacter necessarius subsp. necessarius (strain STIR1) protein is Imidazoleglycerol-phosphate dehydratase.